The following is a 589-amino-acid chain: uncharacterized protein (589 aa).

An RRM domain is found at 242–314; it reads TALEVRNIPE…RFIKIFWYNP (73 aa). Disordered regions lie at residues 322–348, 443–465, and 566–589; these read PKKF…VDPA, ESPA…RGTN, and TSME…GRWR. The residue at position 330 (S330) is a Phosphoserine. Over residues 330-340 the composition is skewed to low complexity; sequence SPTTSDSSNVE. Residue T332 is modified to Phosphothreonine. The residue at position 334 (S334) is a Phosphoserine. Polar residues predominate over residues 566-579; that stretch reads TSMETGESNTSDNM.

The protein localises to the nucleus. This is an uncharacterized protein from Schizosaccharomyces pombe (strain 972 / ATCC 24843) (Fission yeast).